We begin with the raw amino-acid sequence, 238 residues long: Uridylate kinase (238 aa).

An ATP-binding site is contributed by 12-15; that stretch reads KLSG. A UMP-binding site is contributed by G54. 2 residues coordinate ATP: G55 and R59. Residues D74 and 135-142 each bind UMP; that span reads VGAPYFTT. Positions 162, 168, and 171 each coordinate ATP.

The protein belongs to the UMP kinase family. Homohexamer.

The protein resides in the cytoplasm. The enzyme catalyses UMP + ATP = UDP + ADP. The protein operates within pyrimidine metabolism; CTP biosynthesis via de novo pathway; UDP from UMP (UMPK route): step 1/1. With respect to regulation, inhibited by UTP. In terms of biological role, catalyzes the reversible phosphorylation of UMP to UDP. This Erythrobacter litoralis (strain HTCC2594) protein is Uridylate kinase.